Consider the following 199-residue polypeptide: Recombination protein RecR (199 aa).

A C4-type zinc finger spans residues 56 to 71 (CRSCFNVAQSELCRIC). One can recognise a Toprim domain in the interval 79-174 (ALICVVEEPK…RVTRLASGLP (96 aa)).

This sequence belongs to the RecR family.

Functionally, may play a role in DNA repair. It seems to be involved in an RecBC-independent recombinational process of DNA repair. It may act with RecF and RecO. The protein is Recombination protein RecR of Frankia alni (strain DSM 45986 / CECT 9034 / ACN14a).